A 955-amino-acid polypeptide reads, in one-letter code: Valine--tRNA ligase (955 aa).

The 'HIGH' region motif lies at 41-51 (PNITGSLHMGH). The 'KMSKS' region motif lies at 554 to 558 (KMSKS). Lysine 557 contacts ATP. A coiled-coil region spans residues 926-946 (QEKNKLLKLNEINLKLSEQIK).

Belongs to the class-I aminoacyl-tRNA synthetase family. ValS type 1 subfamily. In terms of assembly, monomer.

It is found in the cytoplasm. The catalysed reaction is tRNA(Val) + L-valine + ATP = L-valyl-tRNA(Val) + AMP + diphosphate. In terms of biological role, catalyzes the attachment of valine to tRNA(Val). As ValRS can inadvertently accommodate and process structurally similar amino acids such as threonine, to avoid such errors, it has a 'posttransfer' editing activity that hydrolyzes mischarged Thr-tRNA(Val) in a tRNA-dependent manner. In Buchnera aphidicola subsp. Acyrthosiphon pisum (strain APS) (Acyrthosiphon pisum symbiotic bacterium), this protein is Valine--tRNA ligase.